A 318-amino-acid polypeptide reads, in one-letter code: Transaldolase (318 aa).

The active-site Schiff-base intermediate with substrate is the Lys-126.

It belongs to the transaldolase family. Type 1 subfamily. Homodimer.

Its subcellular location is the cytoplasm. It catalyses the reaction D-sedoheptulose 7-phosphate + D-glyceraldehyde 3-phosphate = D-erythrose 4-phosphate + beta-D-fructose 6-phosphate. Its pathway is carbohydrate degradation; pentose phosphate pathway; D-glyceraldehyde 3-phosphate and beta-D-fructose 6-phosphate from D-ribose 5-phosphate and D-xylulose 5-phosphate (non-oxidative stage): step 2/3. Transaldolase is important for the balance of metabolites in the pentose-phosphate pathway. In Cupriavidus necator (strain ATCC 17699 / DSM 428 / KCTC 22496 / NCIMB 10442 / H16 / Stanier 337) (Ralstonia eutropha), this protein is Transaldolase.